A 234-amino-acid chain; its full sequence is tRNA1(Val) (adenine(37)-N6)-methyltransferase (234 aa).

Belongs to the methyltransferase superfamily. tRNA (adenine-N(6)-)-methyltransferase family.

The protein resides in the cytoplasm. It carries out the reaction adenosine(37) in tRNA1(Val) + S-adenosyl-L-methionine = N(6)-methyladenosine(37) in tRNA1(Val) + S-adenosyl-L-homocysteine + H(+). Its function is as follows. Specifically methylates the adenine in position 37 of tRNA(1)(Val) (anticodon cmo5UAC). The polypeptide is tRNA1(Val) (adenine(37)-N6)-methyltransferase (Phocaeicola vulgatus (strain ATCC 8482 / DSM 1447 / JCM 5826 / CCUG 4940 / NBRC 14291 / NCTC 11154) (Bacteroides vulgatus)).